The following is a 433-amino-acid chain: Enolase (433 aa).

A (2R)-2-phosphoglycerate-binding site is contributed by Gln167. Glu209 (proton donor) is an active-site residue. Asp246, Glu291, and Asp318 together coordinate Mg(2+). Lys326 carries the N6-acetyllysine modification. Residues Lys343, Arg372, Ser373, and Lys394 each coordinate (2R)-2-phosphoglycerate. Catalysis depends on Lys343, which acts as the Proton acceptor. Lys343 carries the N6-(2-hydroxyisobutyryl)lysine modification.

This sequence belongs to the enolase family. In terms of assembly, component of the RNA degradosome, a multiprotein complex involved in RNA processing and mRNA degradation. It depends on Mg(2+) as a cofactor. In terms of processing, acetylated and 2-hydroxyisobutyrylated at Lys-326 and Lys-343, respectively, reducing the enolase activity. Deacetylated and de-2-hydroxyisobutyrylated by NpdA/CobB, increasing the enolase activity.

The protein localises to the cytoplasm. Its subcellular location is the secreted. The protein resides in the cell surface. It catalyses the reaction (2R)-2-phosphoglycerate = phosphoenolpyruvate + H2O. Its pathway is carbohydrate degradation; glycolysis; pyruvate from D-glyceraldehyde 3-phosphate: step 4/5. Functionally, catalyzes the reversible conversion of 2-phosphoglycerate (2-PG) into phosphoenolpyruvate (PEP). It is essential for the degradation of carbohydrates via glycolysis. This chain is Enolase, found in Proteus mirabilis (strain HI4320).